The primary structure comprises 445 residues: Tubulin beta chain (445 aa).

Positions 11, 69, 138, 142, 143, 144, 204, and 226 each coordinate GTP. E69 provides a ligand contact to Mg(2+).

It belongs to the tubulin family. As to quaternary structure, dimer of alpha and beta chains. A typical microtubule is a hollow water-filled tube with an outer diameter of 25 nm and an inner diameter of 15 nM. Alpha-beta heterodimers associate head-to-tail to form protofilaments running lengthwise along the microtubule wall with the beta-tubulin subunit facing the microtubule plus end conferring a structural polarity. Microtubules usually have 13 protofilaments but different protofilament numbers can be found in some organisms and specialized cells. Mg(2+) is required as a cofactor.

The protein localises to the cytoplasm. The protein resides in the cytoskeleton. Functionally, tubulin is the major constituent of microtubules, a cylinder consisting of laterally associated linear protofilaments composed of alpha- and beta-tubulin heterodimers. Microtubules grow by the addition of GTP-tubulin dimers to the microtubule end, where a stabilizing cap forms. Below the cap, tubulin dimers are in GDP-bound state, owing to GTPase activity of alpha-tubulin. The sequence is that of Tubulin beta chain from Coprinopsis cinerea (strain Okayama-7 / 130 / ATCC MYA-4618 / FGSC 9003) (Inky cap fungus).